The following is a 240-amino-acid chain: Ribosomal RNA large subunit methyltransferase E (240 aa).

Positions 1-20 (MSKAGGNKGGSRTGGRGGAG) are enriched in gly residues. The interval 1-40 (MSKAGGNKGGSRTGGRGGAGSSNLHVRVKKKAGTTKESSR) is disordered. Positions 92, 94, 115, 131, and 155 each coordinate S-adenosyl-L-methionine. Lys-195 acts as the Proton acceptor in catalysis.

The protein belongs to the class I-like SAM-binding methyltransferase superfamily. RNA methyltransferase RlmE family.

The protein resides in the cytoplasm. The catalysed reaction is uridine(2552) in 23S rRNA + S-adenosyl-L-methionine = 2'-O-methyluridine(2552) in 23S rRNA + S-adenosyl-L-homocysteine + H(+). Specifically methylates the uridine in position 2552 of 23S rRNA at the 2'-O position of the ribose in the fully assembled 50S ribosomal subunit. This Brucella ovis (strain ATCC 25840 / 63/290 / NCTC 10512) protein is Ribosomal RNA large subunit methyltransferase E.